A 227-amino-acid chain; its full sequence is Ubiquitin domain-containing protein 1 (227 aa).

The disordered stretch occupies residues 1–42 (MGNCVGRQRRERPAAPGHPRKRAGRNEPLKKERLKWKSDYPM). Residues 24 to 38 (GRNEPLKKERLKWKS) are compositionally biased toward basic and acidic residues. A Ubiquitin-like domain is found at 149 to 224 (FPLKVRLSTG…IQVIINQPPP (76 aa)).

Interacts with UBTD1.

In terms of biological role, may be involved in the regulation of cellular senescence through a positive feedback loop with TP53. Is a TP53 downstream target gene that increases the stability of TP53 protein by promoting the ubiquitination and degradation of MDM2. In Mus musculus (Mouse), this protein is Ubiquitin domain-containing protein 1 (Ubtd1).